A 46-amino-acid polypeptide reads, in one-letter code: Photosystem II reaction center protein K (46 aa).

A propeptide spanning residues M1–A9 is cleaved from the precursor. The helical transmembrane segment at L25–F45 threads the bilayer.

This sequence belongs to the PsbK family. As to quaternary structure, PSII is composed of 1 copy each of membrane proteins PsbA, PsbB, PsbC, PsbD, PsbE, PsbF, PsbH, PsbI, PsbJ, PsbK, PsbL, PsbM, PsbT, PsbX, PsbY, Psb30/Ycf12, peripheral proteins PsbO, CyanoQ (PsbQ), PsbU, PsbV and a large number of cofactors. It forms dimeric complexes.

The protein resides in the cellular thylakoid membrane. Functionally, one of the components of the core complex of photosystem II (PSII). PSII is a light-driven water:plastoquinone oxidoreductase that uses light energy to abstract electrons from H(2)O, generating O(2) and a proton gradient subsequently used for ATP formation. It consists of a core antenna complex that captures photons, and an electron transfer chain that converts photonic excitation into a charge separation. This chain is Photosystem II reaction center protein K, found in Prochlorococcus marinus (strain MIT 9215).